A 107-amino-acid chain; its full sequence is U1-lycotoxin-Ls1t (107 aa).

A signal peptide spans 1-20; sequence MMKVLVVVALLVTLISYSSS. The propeptide occupies 21 to 41; the sequence is EGIDDLEADELLSLMANEQTR. Disulfide bonds link C44/C59, C51/C68, C58/C86, and C70/C84.

Belongs to the neurotoxin 19 (CSTX) family. 04 (U1-Lctx) subfamily. As to expression, expressed by the venom gland.

It is found in the secreted. The protein is U1-lycotoxin-Ls1t of Lycosa singoriensis (Wolf spider).